A 460-amino-acid chain; its full sequence is uncharacterized protein (460 aa).

The 59-residue stretch at 8–66 folds into the TRAM domain; that stretch reads PVEKNEFIDVVFEDLTHDGAGVAKVKGYPIFVKNGLPGEEAQIKIIKVKKNFAFGRLMK. 4 residues coordinate [4Fe-4S] cluster: Cys79, Cys85, Cys88, and Cys166. Gln290, Tyr319, Glu340, and Asp388 together coordinate S-adenosyl-L-methionine. Residue Cys415 is the Nucleophile of the active site.

It belongs to the class I-like SAM-binding methyltransferase superfamily. RNA M5U methyltransferase family.

This is an uncharacterized protein from Bacillus cereus (strain ATCC 10987 / NRS 248).